Here is a 473-residue protein sequence, read N- to C-terminus: Ribulose bisphosphate carboxylase large chain (473 aa).

Residues asparagine 116 and threonine 166 each contribute to the substrate site. Residue lysine 168 is the Proton acceptor of the active site. A substrate-binding site is contributed by lysine 170. The Mg(2+) site is built by lysine 194, aspartate 196, and glutamate 197. At lysine 194 the chain carries N6-carboxylysine. Histidine 287 serves as the catalytic Proton acceptor. Positions 288, 320, and 372 each coordinate substrate.

It belongs to the RuBisCO large chain family. Type I subfamily. In terms of assembly, heterohexadecamer of 8 large chains and 8 small chains. Requires Mg(2+) as cofactor.

The enzyme catalyses 2 (2R)-3-phosphoglycerate + 2 H(+) = D-ribulose 1,5-bisphosphate + CO2 + H2O. It catalyses the reaction D-ribulose 1,5-bisphosphate + O2 = 2-phosphoglycolate + (2R)-3-phosphoglycerate + 2 H(+). Functionally, ruBisCO catalyzes two reactions: the carboxylation of D-ribulose 1,5-bisphosphate, the primary event in carbon dioxide fixation, as well as the oxidative fragmentation of the pentose substrate. Both reactions occur simultaneously and in competition at the same active site. The polypeptide is Ribulose bisphosphate carboxylase large chain (Hydrogenophaga pseudoflava (Pseudomonas carboxydoflava)).